Consider the following 1053-residue polypeptide: MITNSKMENKILDEFDEEELNKLKINSNNKESTTTTTSTTTTTTTTTSTSGEESDDEHTGSSSSTAAMELHRYKISQECPVDFEDDYDEESSSFDEEDEDSAAESNGGNGKLIPNPNDKKKKRSSKSSSKSSKSKSKSKNKETTANPVQNCQLMESGTLFSPTEFVKSSTVNPSKSPVQPIKLSSMLGLSELGTSNVLTVQNPQPISEPLKNDISSGSSSSSSSNNNNSNSNSNGNCNSDSTKSKFTSLNSWDAPPLANVLPDPSYCQDIVDSENNFIVPSVKHTILDVDNLFNNLIQNTNNNNNNDFKSSTMIGKPFSSGGDGSTSPLISGLSSSSIIPNGNGSLAEQQQQQQQSIPESEIPIDIKVLQLSGSRMFFNRELSELIYFYRILYEAYNPTYPILERVRFIAITSQNLDMYFCKRALKLRLGYISTRKTLKPEEHYINMVLNTTRNLINEIYNIYMNILAPELSNNNVFIIKYSDLTEPEKIQLRGFFLQHVFPLMTPLVVDAGHPFPNLSNLSLNIAVLLKHDEDTTRFVRIKVPQRIPRFVHIKQRSNYSIIPMEEIILANLDTLFPNTKILTKSLFRVSRHNDLKLSGEDQANDLLELIKTELHKRKFAPMVRLEVSHNMPAEILDMLKTQLALDAYDVYVINGPLGLQDLFELCKLNLPHLKFQPWVPHIPSRLVNLAKYPSEDVFSVIRKGELLVNLPYLSFNSSVQFFIESAVKDPKVLAIKIAIYRTNSNSQLIRALCEAASHKEVMVLVDLKASGDEEQNTKFARLLEQAGCHVSYGLVGLKTHAKIAMVVREEENGLREYLNISTGNYNASTSDVYADICLFSCDPDLGEDMCNLFNYLTGYSRVSSFKKLLIAPMNMRSTLIQLIDNEAKNAREGKDATINAVMNGLDDKRLVNALYQASIAGVKITLVVRGRCRILPGIKGISENIKVISILGRFLEHSRIYCFHNNGKPKAYIASADWLHRNLKRRVEVMVPVDDANNIKQLYEIINVYCNDSNAWEMLSDGRYKKRSSPIDEDSQTQFMNQTNQKHPVIWSK.

3 disordered regions span residues 23-155 (LKIN…QLME), 200-245 (VQNP…TKSK), and 302-328 (NNNNNDFKSSTMIGKPFSSGGDGSTSP). The segment covering 32-50 (STTTTTSTTTTTTTTTSTS) has biased composition (low complexity). Positions 81–102 (VDFEDDYDEESSSFDEEDEDSA) are enriched in acidic residues. Positions 143 to 155 (TTANPVQNCQLME) are enriched in polar residues. Residues 215-239 (SSGSSSSSSSNNNNSNSNSNGNCNS) are compositionally biased toward low complexity. H800 serves as the catalytic Phosphohistidine intermediate. The interval 1027–1053 (RSSPIDEDSQTQFMNQTNQKHPVIWSK) is disordered. Residues 1036–1046 (QTQFMNQTNQK) are compositionally biased toward polar residues.

This sequence belongs to the polyphosphate kinase 1 (PPK1) family. As to quaternary structure, hexamer. May form higher oligomeric structures in the presence of ATP.

It is found in the vesicle. It catalyses the reaction [phosphate](n) + ATP = [phosphate](n+1) + ADP. Catalyzes the reversible transfer of the terminal phosphate of ATP to form a long-chain polyphosphate (polyP). Produces polyP in a broad range of chain lengths (50-300 Pi residues). Involved in development (growth and fruiting body formation), sporulation, phagocytosis, cell division and the late stages of cytokinesis. The protein is Polyphosphate kinase (ppkA) of Dictyostelium discoideum (Social amoeba).